The chain runs to 406 residues: Argininosuccinate synthase (406 aa).

ATP contacts are provided by residues 14–22 (AYSGGLDTS) and Ala-41. L-citrulline contacts are provided by Tyr-92 and Ser-97. Gly-122 contributes to the ATP binding site. L-aspartate-binding residues include Thr-124, Asn-128, and Asp-129. Residue Asn-128 participates in L-citrulline binding. The L-citrulline site is built by Arg-132, Ser-181, Ser-190, Glu-266, and Tyr-278.

This sequence belongs to the argininosuccinate synthase family. Type 1 subfamily. As to quaternary structure, homotetramer.

It localises to the cytoplasm. The enzyme catalyses L-citrulline + L-aspartate + ATP = 2-(N(omega)-L-arginino)succinate + AMP + diphosphate + H(+). It participates in amino-acid biosynthesis; L-arginine biosynthesis; L-arginine from L-ornithine and carbamoyl phosphate: step 2/3. In Geobacter metallireducens (strain ATCC 53774 / DSM 7210 / GS-15), this protein is Argininosuccinate synthase.